The chain runs to 127 residues: Large ribosomal subunit protein uL18 (127 aa).

The protein belongs to the universal ribosomal protein uL18 family. Part of the 50S ribosomal subunit; part of the 5S rRNA/L5/L18/L25 subcomplex. Contacts the 5S and 23S rRNAs.

Functionally, this is one of the proteins that bind and probably mediate the attachment of the 5S RNA into the large ribosomal subunit, where it forms part of the central protuberance. The protein is Large ribosomal subunit protein uL18 of Streptomyces avermitilis (strain ATCC 31267 / DSM 46492 / JCM 5070 / NBRC 14893 / NCIMB 12804 / NRRL 8165 / MA-4680).